The primary structure comprises 174 residues: MAGQSRPDLIRIGQVTAPHGVRGAVRVYPTTDFPERFVTLKRVMIDGPDRAVGARFRGFVKNLVILELEGITDRNQAERLRGADLLVPREEVHPLPEGYYYDFDIIGIEVVDPDGRQLGRVVEVDHTSPVHDLYVVETAPGKRYLVPAVRRFVKEIDLETGRMVIDPIPGLLED.

The region spanning 97–171 (EGYYYDFDII…RMVIDPIPGL (75 aa)) is the PRC barrel domain.

Belongs to the RimM family. In terms of assembly, binds ribosomal protein uS19.

The protein localises to the cytoplasm. An accessory protein needed during the final step in the assembly of 30S ribosomal subunit, possibly for assembly of the head region. Essential for efficient processing of 16S rRNA. May be needed both before and after RbfA during the maturation of 16S rRNA. It has affinity for free ribosomal 30S subunits but not for 70S ribosomes. This chain is Ribosome maturation factor RimM, found in Symbiobacterium thermophilum (strain DSM 24528 / JCM 14929 / IAM 14863 / T).